We begin with the raw amino-acid sequence, 533 residues long: Bifunctional purine biosynthesis protein PurH (533 aa).

Residues 1–148 (MQPNRPIRQA…KNHQDVAIVV (148 aa)) form the MGS-like domain.

It belongs to the PurH family.

The enzyme catalyses (6R)-10-formyltetrahydrofolate + 5-amino-1-(5-phospho-beta-D-ribosyl)imidazole-4-carboxamide = 5-formamido-1-(5-phospho-D-ribosyl)imidazole-4-carboxamide + (6S)-5,6,7,8-tetrahydrofolate. The catalysed reaction is IMP + H2O = 5-formamido-1-(5-phospho-D-ribosyl)imidazole-4-carboxamide. The protein operates within purine metabolism; IMP biosynthesis via de novo pathway; 5-formamido-1-(5-phospho-D-ribosyl)imidazole-4-carboxamide from 5-amino-1-(5-phospho-D-ribosyl)imidazole-4-carboxamide (10-formyl THF route): step 1/1. It participates in purine metabolism; IMP biosynthesis via de novo pathway; IMP from 5-formamido-1-(5-phospho-D-ribosyl)imidazole-4-carboxamide: step 1/1. In Pasteurella multocida (strain Pm70), this protein is Bifunctional purine biosynthesis protein PurH.